A 222-amino-acid polypeptide reads, in one-letter code: ER membrane protein complex subunit 7 homolog (222 aa).

A signal peptide spans 1-16 (MKSILLLFSLIVLGSA). At 17–145 (TEEVSRTEQT…RKREEWRITD (129 aa)) the chain is on the extracellular side. Residues 146-166 (MLFSPMVLMLVVPLVVMLILP) form a helical membrane-spanning segment. Over 167–222 (KMTANDPELKKEMENMQMPKVDMPDVGEMMANFFGGSAPAKKKAVTGGSGSGQRRK) the chain is Cytoplasmic.

It belongs to the EMC7 family.

It is found in the membrane. The chain is ER membrane protein complex subunit 7 homolog from Caenorhabditis elegans.